The following is a 416-amino-acid chain: CinA-like protein (416 aa).

Belongs to the CinA family.

The protein is CinA-like protein of Rippkaea orientalis (strain PCC 8801 / RF-1) (Cyanothece sp. (strain PCC 8801)).